Here is a 224-residue protein sequence, read N- to C-terminus: TM2 domain-containing protein amaretto (224 aa).

A signal peptide spans M1–A18. The Extracellular portion of the chain corresponds to Q19–R154. N-linked (GlcNAc...) asparagine glycosylation is found at N102 and N142. The chain crosses the membrane as a helical span at residues Y155–M175. Positions D157–I205 constitute a TM2 domain. At D176–K189 the chain is on the cytoplasmic side. A helical transmembrane segment spans residues L190 to N210. Over N211–V224 the chain is Extracellular.

Belongs to the TM2 family.

The protein localises to the membrane. Positive regulator of Notch signaling. Maternal neurogenic factor involved in Notch signaling-dependent neuroectodermal specification during early embryogenesis. Functions cooperatively with amx/TM2D3 and bisc/TM2D1. The protein is TM2 domain-containing protein amaretto of Drosophila melanogaster (Fruit fly).